The sequence spans 281 residues: Ribosomal RNA small subunit methyltransferase J (281 aa).

S-adenosyl-L-methionine contacts are provided by residues 129 to 130, 145 to 146, and D199; these read RD and ER.

Belongs to the methyltransferase superfamily. RsmJ family.

It localises to the cytoplasm. It carries out the reaction guanosine(1516) in 16S rRNA + S-adenosyl-L-methionine = N(2)-methylguanosine(1516) in 16S rRNA + S-adenosyl-L-homocysteine + H(+). In terms of biological role, specifically methylates the guanosine in position 1516 of 16S rRNA. The sequence is that of Ribosomal RNA small subunit methyltransferase J from Laribacter hongkongensis (strain HLHK9).